The chain runs to 547 residues: Oncoprotein-induced transcript 3 protein (547 aa).

The signal sequence occupies residues 1-19 (MPQLLLLACLLIIVTRVAP). N-linked (GlcNAc...) asparagine glycans are attached at residues Asn89 and Asn116. Positions 182 to 222 (DENECEQNNGGCSEICVNLKNSYRCECGIGRVLRSDGKTCE) constitute an EGF-like; calcium-binding domain. 3 cysteine pairs are disulfide-bonded: Cys186-Cys197, Cys193-Cys206, and Cys208-Cys221. The ZP domain occupies 267-516 (FCKSNTIEVS…SRCAQGCHRR (250 aa)). Residue Asn299 is glycosylated (N-linked (GlcNAc...) asparagine). The segment at 520–547 (EASTEGEDASGPRSQMLTGGPISIDWED) is disordered.

The protein localises to the nucleus envelope. Its function is as follows. May be involved in hepatocellular function and development. This Bos taurus (Bovine) protein is Oncoprotein-induced transcript 3 protein (OIT3).